Here is a 119-residue protein sequence, read N- to C-terminus: V-type proton ATPase subunit F (119 aa).

This sequence belongs to the V-ATPase F subunit family. V-ATPase is a heteromultimeric enzyme made up of two complexes: the ATP-hydrolytic V1 complex and the proton translocation V0 complex. The V1 complex consists of three catalytic AB heterodimers that form a heterohexamer, three peripheral stalks each consisting of EG heterodimers, one central rotor including subunits D and F, and the regulatory subunits C and H. The proton translocation complex V0 consists of the proton transport subunit a, a ring of proteolipid subunits c9c'', rotary subunit d, subunits e and f, and the accessory subunits ATP6AP1/Ac45 and ATP6AP2/PRR.

Its subcellular location is the cytoplasmic vesicle. The protein resides in the secretory vesicle. The protein localises to the synaptic vesicle membrane. It localises to the clathrin-coated vesicle membrane. In terms of biological role, subunit of the V1 complex of vacuolar(H+)-ATPase (V-ATPase), a multisubunit enzyme composed of a peripheral complex (V1) that hydrolyzes ATP and a membrane integral complex (V0) that translocates protons. V-ATPase is responsible for acidifying and maintaining the pH of intracellular compartments and in some cell types, is targeted to the plasma membrane, where it is responsible for acidifying the extracellular environment. This is V-type proton ATPase subunit F (Atp6v1f) from Mus musculus (Mouse).